Reading from the N-terminus, the 929-residue chain is Lon protease homolog 2, peroxisomal (929 aa).

A Lon N-terminal domain is found at 11-257; it reads LPLVPLPKGS…RVVEILTRQL (247 aa). Positions 302–325 are disordered; sequence GLTPPGLSAGRNNDNDDKESNEVD. 484–491 lines the ATP pocket; sequence GPPGVGKT. The Lon proteolytic domain maps to 727-914; sequence HGRPGVVTGL…WEAIRQVWPD (188 aa). Catalysis depends on residues Ser820 and Lys863. The short motif at 927–929 is the Microbody targeting signal element; that stretch reads SRL.

Belongs to the peptidase S16 family.

It localises to the peroxisome matrix. It carries out the reaction Hydrolysis of proteins in presence of ATP.. In terms of biological role, ATP-dependent serine protease that mediates the selective degradation of misfolded and unassembled polypeptides in the peroxisomal matrix. Necessary for type 2 peroxisome targeting signal (PTS2)-containing protein processing and facilitates peroxisome matrix protein import. The protein is Lon protease homolog 2, peroxisomal of Aspergillus niger (strain ATCC MYA-4892 / CBS 513.88 / FGSC A1513).